Here is a 583-residue protein sequence, read N- to C-terminus: Threonine--tRNA ligase (583 aa).

The catalytic stretch occupies residues 185–478; sequence DHRKLGRELD…LVEHYGGAFP (294 aa). Cysteine 278, histidine 329, and histidine 455 together coordinate Zn(2+).

It belongs to the class-II aminoacyl-tRNA synthetase family. Homodimer. Zn(2+) is required as a cofactor.

It is found in the cytoplasm. It carries out the reaction tRNA(Thr) + L-threonine + ATP = L-threonyl-tRNA(Thr) + AMP + diphosphate + H(+). Its function is as follows. Catalyzes the attachment of threonine to tRNA(Thr) in a two-step reaction: L-threonine is first activated by ATP to form Thr-AMP and then transferred to the acceptor end of tRNA(Thr). Also edits incorrectly charged L-seryl-tRNA(Thr). This chain is Threonine--tRNA ligase, found in Borrelia turicatae (strain 91E135).